We begin with the raw amino-acid sequence, 76 residues long: Sec-independent protein translocase protein TatA (76 aa).

The helical transmembrane segment at 1–21 (MGSFSIWHWLIVLVIVMLIFG) threads the bilayer. The interval 47–76 (NADKPAEEAQPTQQVGGHTIDVEVKEKTKS) is disordered. Basic and acidic residues predominate over residues 66–76 (IDVEVKEKTKS).

The protein belongs to the TatA/E family. As to quaternary structure, the Tat system comprises two distinct complexes: a TatABC complex, containing multiple copies of TatA, TatB and TatC subunits, and a separate TatA complex, containing only TatA subunits. Substrates initially bind to the TatABC complex, which probably triggers association of the separate TatA complex to form the active translocon.

It localises to the cell inner membrane. Functionally, part of the twin-arginine translocation (Tat) system that transports large folded proteins containing a characteristic twin-arginine motif in their signal peptide across membranes. TatA could form the protein-conducting channel of the Tat system. This chain is Sec-independent protein translocase protein TatA, found in Dechloromonas aromatica (strain RCB).